Here is a 215-residue protein sequence, read N- to C-terminus: MVEKSVLIDALKKAKEQAPERKFTESVDMTINLKNIDMSQPKNRIDETILLPHGNGRVVKIAVLGSGDIVTQARESGVELIMGPEEIERLGGAPREARKIASEHQFFLAETQVMSLVGRWLGPRLGPRGRMPQPIPAGTDIRPIVERLRKSVKIRTKDKMSFSLKVGTTAMSEEEIAENIDAVLKRILSKLEMGDFQVRSVYIKTTMGPSVKVEL.

It belongs to the universal ribosomal protein uL1 family. As to quaternary structure, part of the 50S ribosomal subunit.

In terms of biological role, binds directly to 23S rRNA. Probably involved in E site tRNA release. Functionally, protein L1 is also a translational repressor protein, it controls the translation of its operon by binding to its mRNA. The sequence is that of Large ribosomal subunit protein uL1 from Methanospirillum hungatei JF-1 (strain ATCC 27890 / DSM 864 / NBRC 100397 / JF-1).